Here is a 65-residue protein sequence, read N- to C-terminus: Toxin AaHIT4 (65 aa).

One can recognise an LCN-type CS-alpha/beta domain in the interval 1–64; that stretch reads EHGYLLNKYT…LWNYKTNKCD (64 aa). Intrachain disulfides connect Cys-12/Cys-63, Cys-16/Cys-38, Cys-23/Cys-45, and Cys-27/Cys-47.

It belongs to the long (4 C-C) scorpion toxin superfamily. Sodium channel inhibitor family. Expressed by the venom gland.

It is found in the secreted. In terms of biological role, has a toxic effect on insects and mammals and is capable of competing with anti-insect scorpion toxins for binding to the sodium channel (Nav) of insects. It also modulates the binding of alpha-type and beta-type anti-mammal scorpion toxins to the mammal sodium channel. It may act on both site 3 and site 4 of voltage-gated sodium channels. This is Toxin AaHIT4 from Androctonus australis (Sahara scorpion).